We begin with the raw amino-acid sequence, 209 residues long: Dof zinc finger protein DOF1.6 (209 aa).

Polar residues predominate over residues 1–17; sequence MPSEPNQTRPTRVQPST. Positions 1-29 are disordered; that stretch reads MPSEPNQTRPTRVQPSTAAYPPPNLAEPL. Positions 20 to 29 are enriched in pro residues; sequence YPPPNLAEPL. Residues 29–83 form a Dof-type zinc finger; the sequence is LPCPRCNSTTTKFCYYNNYNLAQPRYYCKSCRRYWTQGGTLRDVPVGGGTRRSSS. 4 residues coordinate Zn(2+): cysteine 31, cysteine 34, cysteine 56, and cysteine 59. A disordered region spans residues 70–116; the sequence is RDVPVGGGTRRSSSKRHRSFSTTATSSSSSSSVITTTTQEPATTEAS. The span at 89 to 116 shows a compositional bias: low complexity; that stretch reads FSTTATSSSSSSSVITTTTQEPATTEAS.

It is found in the nucleus. Functionally, transcription factor that binds specifically to a 5'-AA[AG]G-3' consensus core sequence. The protein is Dof zinc finger protein DOF1.6 (DOF1.6) of Arabidopsis thaliana (Mouse-ear cress).